The following is a 378-amino-acid chain: GTPase Obg (378 aa).

One can recognise an Obg domain in the interval 1 to 159; that stretch reads MKFVDEATIE…RRLRLELKVL (159 aa). The 177-residue stretch at 160–336 folds into the OBG-type G domain; that stretch reads ADVGLLGLPN…LIWALQDYLD (177 aa). Residues 166-173, 191-195, 213-216, 288-291, and 317-319 contribute to the GTP site; these read GLPNAGKS, FTTLH, DIPG, NKLD, and SGL. The Mg(2+) site is built by Ser-173 and Thr-193. Residues 345–378 form a disordered region; it reads AQDQADGTYVAEDPRFDATRSDAAPPGAPRGGDE.

It belongs to the TRAFAC class OBG-HflX-like GTPase superfamily. OBG GTPase family. Monomer. It depends on Mg(2+) as a cofactor.

The protein localises to the cytoplasm. In terms of biological role, an essential GTPase which binds GTP, GDP and possibly (p)ppGpp with moderate affinity, with high nucleotide exchange rates and a fairly low GTP hydrolysis rate. Plays a role in control of the cell cycle, stress response, ribosome biogenesis and in those bacteria that undergo differentiation, in morphogenesis control. This is GTPase Obg from Bordetella petrii (strain ATCC BAA-461 / DSM 12804 / CCUG 43448).